The chain runs to 376 residues: Probable inactive protein kinase At3g63330 (376 aa).

Residues 1-370 (MVERGPTVYL…VDEALQHPYF (370 aa)) form the Protein kinase domain.

Belongs to the protein kinase superfamily. Ser/Thr protein kinase family.

The chain is Probable inactive protein kinase At3g63330 from Arabidopsis thaliana (Mouse-ear cress).